A 106-amino-acid chain; its full sequence is Iron-sulfur cluster assembly protein CyaY (106 aa).

The protein belongs to the frataxin family.

Functionally, involved in iron-sulfur (Fe-S) cluster assembly. May act as a regulator of Fe-S biogenesis. This chain is Iron-sulfur cluster assembly protein CyaY, found in Escherichia coli (strain SMS-3-5 / SECEC).